Consider the following 282-residue polypeptide: GDT1-like protein 4 (282 aa).

Positions 1–26 (MARRVSTTRLLLLLLLVAAAAAAAAA) are cleaved as a signal peptide. 6 helical membrane-spanning segments follow: residues 67–87 (AGLG…VSEI), 106–126 (TVLS…TGLG), 138–158 (TNSA…YIAW), 189–209 (IFSR…FLAE), 227–247 (AVGV…FAVV), and 259–279 (GTVA…SYFY).

The protein belongs to the GDT1 family.

It is found in the membrane. The chain is GDT1-like protein 4 from Oryza sativa subsp. japonica (Rice).